The sequence spans 153 residues: Superoxide dismutase [Cu-Zn] (153 aa).

Positions 45, 47, and 62 each coordinate Cu cation. Cysteines 56 and 145 form a disulfide. Positions 62, 70, 79, and 82 each coordinate Zn(2+). Residue His119 participates in Cu cation binding.

It belongs to the Cu-Zn superoxide dismutase family. Homodimer. It depends on Cu cation as a cofactor. The cofactor is Zn(2+).

Its subcellular location is the cytoplasm. The catalysed reaction is 2 superoxide + 2 H(+) = H2O2 + O2. In terms of biological role, destroys radicals which are normally produced within the cells and which are toxic to biological systems. The protein is Superoxide dismutase [Cu-Zn] (Sod) of Chymomyza amoena.